The following is a 244-amino-acid chain: 3-oxoacyl-[acyl-carrier-protein] reductase FabG (244 aa).

Residues 12 to 15, threonine 37, 59 to 60, and asparagine 86 each bind NADP(+); these read GASR and NV. Serine 138 serves as a coordination point for substrate. Tyrosine 151 functions as the Proton acceptor in the catalytic mechanism. NADP(+) contacts are provided by residues 151–155 and isoleucine 184; that span reads YAAAK.

Belongs to the short-chain dehydrogenases/reductases (SDR) family. In terms of assembly, homotetramer.

The catalysed reaction is a (3R)-hydroxyacyl-[ACP] + NADP(+) = a 3-oxoacyl-[ACP] + NADPH + H(+). It participates in lipid metabolism; fatty acid biosynthesis. Functionally, catalyzes the NADPH-dependent reduction of beta-ketoacyl-ACP substrates to beta-hydroxyacyl-ACP products, the first reductive step in the elongation cycle of fatty acid biosynthesis. The sequence is that of 3-oxoacyl-[acyl-carrier-protein] reductase FabG (fabG) from Vibrio cholerae serotype O1 (strain ATCC 39315 / El Tor Inaba N16961).